Reading from the N-terminus, the 328-residue chain is MSQTTATLPLPSPESAIALAGSGEDNLTYLAHHTGAKLILRGQELMVVGTEKAVARVMAVLQSLAPYWQSAKAISRPDLMTAFHALDTGKQEEHQALQKTVLAKTRRGEIVRAKTFRQRQYIKAIQKHDVTFCIGPAGTGKTFLAAVLAVQALLNNECDRLILTRPAVEAGEKLGFLPGDLQQKVDPFLRPLYDALYEFIEPEKIPDLMERGKIEVAPLAYMRGRTLTNAFVIVDEAQNTTPAQLKMVLTRLGFGSKMIVTGDITQTDLPNYQKSGLQVAQTILKDVEGVAFCYLNQADVVRHPLVQRIVEAYERSENTSPPAPKPSS.

Residue 135-142 participates in ATP binding; it reads GPAGTGKT.

This sequence belongs to the PhoH family.

The protein localises to the cytoplasm. The polypeptide is PhoH-like protein (Synechocystis sp. (strain ATCC 27184 / PCC 6803 / Kazusa)).